A 338-amino-acid chain; its full sequence is GTPase Obg (338 aa).

Positions 1–159 constitute an Obg domain; that stretch reads MQFIDQAEIE…RRIRLELKLL (159 aa). In terms of domain architecture, OBG-type G spans 160–328; that stretch reads AEVGIIGLPN…MLQATWEQLD (169 aa). GTP is bound by residues 166 to 173, 191 to 195, 213 to 216, 280 to 283, and 309 to 311; these read GLPNAGKS, FTTLI, DIPG, NKLD, and SAV. Mg(2+) is bound by residues Ser173 and Thr193.

It belongs to the TRAFAC class OBG-HflX-like GTPase superfamily. OBG GTPase family. In terms of assembly, monomer. Requires Mg(2+) as cofactor.

The protein resides in the cytoplasm. In terms of biological role, an essential GTPase which binds GTP, GDP and possibly (p)ppGpp with moderate affinity, with high nucleotide exchange rates and a fairly low GTP hydrolysis rate. Plays a role in control of the cell cycle, stress response, ribosome biogenesis and in those bacteria that undergo differentiation, in morphogenesis control. In Gloeothece citriformis (strain PCC 7424) (Cyanothece sp. (strain PCC 7424)), this protein is GTPase Obg.